Here is a 619-residue protein sequence, read N- to C-terminus: 4-hydroxyphenylalkanoate adenylyltransferase (619 aa).

Belongs to the ATP-dependent AMP-binding enzyme family.

The catalysed reaction is 17-(4-hydroxyphenyl)heptadecanoate + holo-[(phenol)carboxyphthiodiolenone synthase] + ATP = 17-(4-hydroxyphenyl)heptadecanoyl-[(phenol)carboxyphthiodiolenone synthase] + AMP + diphosphate. It catalyses the reaction 19-(4-hydroxyphenyl)nonadecanoate + holo-[(phenol)carboxyphthiodiolenone synthase] + ATP = 19-(4-hydroxyphenyl)nonadecanoyl-[(phenol)carboxyphthiodiolenone synthase] + AMP + diphosphate. It functions in the pathway lipid metabolism; fatty acid biosynthesis. Functionally, catalyzes the activation of long-chain fatty acids as acyl-adenylates (acyl-AMP), which are then transferred to the multifunctional polyketide synthase PpsA for further chain extension. Involved in the biosynthesis of phenolphthiocerol, which is an important intermediate in the biosynthesis of phenolic glycolipid (PGL), also called mycosid B. The polypeptide is 4-hydroxyphenylalkanoate adenylyltransferase (fadD29) (Mycobacterium bovis (strain ATCC BAA-935 / AF2122/97)).